The primary structure comprises 126 residues: Anti-adapter protein IraD (126 aa).

This sequence belongs to the GpW/Gp25 family. IraD subfamily. As to quaternary structure, interacts with RssB.

The protein resides in the cytoplasm. Its function is as follows. Inhibits RpoS proteolysis by regulating RssB activity, thereby increasing the stability of the sigma stress factor RpoS during oxidative stress. Its effect on RpoS stability is due to its interaction with RssB, which probably blocks the interaction of RssB with RpoS, and the consequent delivery of the RssB-RpoS complex to the ClpXP protein degradation pathway. This chain is Anti-adapter protein IraD, found in Salmonella arizonae (strain ATCC BAA-731 / CDC346-86 / RSK2980).